Consider the following 72-residue polypeptide: Translation initiation factor IF-1 (72 aa).

An S1-like domain is found at 1-72 (MAKEEAIEIE…SKGRITYRYK (72 aa)).

It belongs to the IF-1 family. As to quaternary structure, component of the 30S ribosomal translation pre-initiation complex which assembles on the 30S ribosome in the order IF-2 and IF-3, IF-1 and N-formylmethionyl-tRNA(fMet); mRNA recruitment can occur at any time during PIC assembly.

The protein localises to the cytoplasm. Its function is as follows. One of the essential components for the initiation of protein synthesis. Stabilizes the binding of IF-2 and IF-3 on the 30S subunit to which N-formylmethionyl-tRNA(fMet) subsequently binds. Helps modulate mRNA selection, yielding the 30S pre-initiation complex (PIC). Upon addition of the 50S ribosomal subunit IF-1, IF-2 and IF-3 are released leaving the mature 70S translation initiation complex. In Chlorobium luteolum (strain DSM 273 / BCRC 81028 / 2530) (Pelodictyon luteolum), this protein is Translation initiation factor IF-1.